The chain runs to 481 residues: Probable glycine dehydrogenase (decarboxylating) subunit 2 (481 aa).

The tract at residues 1 to 23 (MVIFEKTRGKNSPSVMPSKKGDV) is disordered. The residue at position 263 (Lys263) is an N6-(pyridoxal phosphate)lysine.

Belongs to the GcvP family. C-terminal subunit subfamily. As to quaternary structure, the glycine cleavage system is composed of four proteins: P, T, L and H. In this organism, the P 'protein' is a heterodimer of two subunits. It depends on pyridoxal 5'-phosphate as a cofactor.

It carries out the reaction N(6)-[(R)-lipoyl]-L-lysyl-[glycine-cleavage complex H protein] + glycine + H(+) = N(6)-[(R)-S(8)-aminomethyldihydrolipoyl]-L-lysyl-[glycine-cleavage complex H protein] + CO2. The glycine cleavage system catalyzes the degradation of glycine. The P protein binds the alpha-amino group of glycine through its pyridoxal phosphate cofactor; CO(2) is released and the remaining methylamine moiety is then transferred to the lipoamide cofactor of the H protein. The chain is Probable glycine dehydrogenase (decarboxylating) subunit 2 from Francisella philomiragia subsp. philomiragia (strain ATCC 25017 / CCUG 19701 / FSC 153 / O#319-036).